We begin with the raw amino-acid sequence, 440 residues long: Muscarinic acetylcholine receptor M2 (440 aa).

A helical transmembrane segment spans residues 1–19 (VLVAGSLSLVTIIGNILVM). Over 20–33 (VSIKVNRHLQTVNN) the chain is Cytoplasmic. Residues 34–54 (YFLFSLACADLIIGVFSMNLY) traverse the membrane as a helical segment. Residues 55 to 71 (TLYTVIGYWPLGPVVCD) are Extracellular-facing. Cys-70 and Cys-150 are disulfide-bonded. A helical transmembrane segment spans residues 72 to 93 (LWLALDYVVSNASVMNLLIISF). The Important for signaling motif lies at 94-96 (DRY). Over 94–113 (DRYFCVTKPLTYPVKRTTKM) the chain is Cytoplasmic. Residues 114–136 (AGMMIAAAWVLSFILWAPAILFW) form a helical membrane-spanning segment. The Extracellular segment spans residues 137–158 (QFIVGVRTVEDGECYIQFFSNA). Residues 159 to 183 (AVTFGTAIAAFYLPVIIMTVLYWHI) traverse the membrane as a helical segment. Residues 184 to 361 (SRASKSRIKK…PPSREKKVTR (178 aa)) lie on the Cytoplasmic side of the membrane. The tract at residues 192-329 (KKDKKEPVAN…VVGSSGQNGD (138 aa)) is disordered. Ser-206 is modified (phosphoserine). Positions 228-244 (GLEHNKIQNGKAPRDPV) are enriched in basic and acidic residues. Composition is skewed to polar residues over residues 258-267 (NDSTSVSAVA), 278-287 (DENTVSTSLG), and 308-327 (SDSC…SGQN). Residues 362 to 384 (TILAILLAFIITWAPYNVMVLIN) traverse the membrane as a helical segment. Topologically, residues 385-392 (TFCAPCIP) are extracellular. The cysteines at positions 387 and 390 are disulfide-linked. The chain crosses the membrane as a helical span at residues 393-416 (NTVWTIGYWLCYINSTINPACYAL). Positions 410–414 (NPACY) match the Important for signaling motif. Over 417-440 (CNATFKKTFKHLLMCHYKNIGATR) the chain is Cytoplasmic. 3 positions are modified to phosphothreonine: Thr-420, Thr-424, and Thr-439.

This sequence belongs to the G-protein coupled receptor 1 family. Muscarinic acetylcholine receptor subfamily. CHRM2 sub-subfamily. As to quaternary structure, interacts with ARRB1 and ARRB2. Interacts with RACK1; the interaction regulates CHRM2 internalization. Post-translationally, phosphorylated in response to agonist treatment.

The protein localises to the cell membrane. It localises to the postsynaptic cell membrane. Functionally, the muscarinic acetylcholine receptor mediates various cellular responses, including inhibition of adenylate cyclase, breakdown of phosphoinositides and modulation of potassium channels through the action of G proteins. Primary transducing effect is adenylate cyclase inhibition. Signaling promotes phospholipase C activity, leading to the release of inositol trisphosphate (IP3); this then triggers calcium ion release into the cytosol. This chain is Muscarinic acetylcholine receptor M2 (CHRM2), found in Pan troglodytes (Chimpanzee).